Here is a 344-residue protein sequence, read N- to C-terminus: Probable electron transfer flavoprotein subunit alpha, mitochondrial (344 aa).

Leu-284–Asp-312 contacts FAD.

This sequence belongs to the ETF alpha-subunit/FixB family. Heterodimer of an alpha and a beta subunit. FAD is required as a cofactor.

It localises to the mitochondrion matrix. Its function is as follows. The electron transfer flavoprotein serves as a specific electron acceptor for several dehydrogenases, including five acyl-CoA dehydrogenases, glutaryl-CoA and sarcosine dehydrogenase. It transfers the electrons to the main mitochondrial respiratory chain via ETF-ubiquinone oxidoreductase (ETF dehydrogenase). This chain is Probable electron transfer flavoprotein subunit alpha, mitochondrial (AIM45), found in Saccharomyces cerevisiae (strain ATCC 204508 / S288c) (Baker's yeast).